The sequence spans 538 residues: Interleukin-21 receptor (538 aa).

An N-terminal signal peptide occupies residues 1–19 (MPRGWAAPLLLLLLQGGWG). 3 disulfides stabilise this stretch: Cys20-Cys109, Cys25-Cys35, and Cys65-Cys81. The Extracellular portion of the chain corresponds to 20–232 (CPDLVCYTDY…FQTQSEELKE (213 aa)). Fibronectin type-III domains lie at 21–118 (PDLV…AESI) and 119–228 (KPAP…TQSE). N-linked (GlcNAc...) asparagine glycans are attached at residues Asn73, Asn97, Asn104, Asn125, and Asn135. Trp214 is a glycosylation site (C-linked (Man) tryptophan). A WSXWS motif motif is present at residues 214–218 (WSEWS). A helical transmembrane segment spans residues 233 to 253 (GWNPHLLLLLLLVIVFIPAFW). Topologically, residues 254-538 (SLKTHPLWRL…PLSSPGPQAS (285 aa)) are cytoplasmic. Residues 266-274 (KIWAVPSPE) carry the Box 1 motif motif. Disordered stretches follow at residues 342 to 367 (ESDG…SEER) and 457 to 487 (EDWA…GLDM).

The protein belongs to the type I cytokine receptor family. Type 4 subfamily. Heterodimer with the common gamma subunit. Associates with JAK1. In terms of processing, C-mannosylated at Trp-214 in the WSXWS motif, the sugar chain makes extensive hydrogen bonds with Asn-73 sugar, and bridges the two fibronectin domains transforming the V-shaped receptor into an A-frame. Selectively expressed in lymphoid tissues. Most highly expressed in thymus and spleen.

It localises to the membrane. This is a receptor for interleukin-21. This chain is Interleukin-21 receptor (IL21R), found in Homo sapiens (Human).